Consider the following 911-residue polypeptide: DNA replication licensing factor mcm4 (911 aa).

A disordered region spans residues 1 to 132; it reads MSSSQQSGRA…RPGVSTPSSL (132 aa). Phosphoserine is present on residues Ser-37, Ser-38, and Ser-41. Residues 42-56 show a composition bias toward low complexity; the sequence is TRLTTPRTTARTPLA. A compositionally biased stretch (polar residues) spans 63-84; it reads ESSSPGPNIPQSSRSHLLSQRN. Ser-92 carries the phosphoserine modification. Residues 493-702 enclose the MCM domain; sequence IYDILSRSLA…LDRKLANHIV (210 aa). 545–552 provides a ligand contact to ATP; it reads GDPSTSKS. An Arginine finger motif is present at residues 677 to 680; sequence SRFD.

The protein belongs to the MCM family. Component of the mcm2-7 complex. The complex forms a toroidal hexameric ring with the proposed subunit order mcm2-mcm6-mcm4-mcm7-mcm3-mcm5. The heterodimers of mcm4/mcm6 and mcm3/mcm5 interact with mcm2 and mcm7.

The protein localises to the nucleus. It carries out the reaction ATP + H2O = ADP + phosphate + H(+). Functionally, acts as a component of the mcm2-7 complex (mcm complex) which is the putative replicative helicase essential for 'once per cell cycle' DNA replication initiation and elongation in eukaryotic cells. The active ATPase sites in the mcm2-7 ring are formed through the interaction surfaces of two neighboring subunits such that a critical structure of a conserved arginine finger motif is provided in trans relative to the ATP-binding site of the Walker A box of the adjacent subunit. The six ATPase active sites, however, are likely to contribute differentially to the complex helicase activity. Required for S phase execution. The chain is DNA replication licensing factor mcm4 (mcm4) from Schizosaccharomyces pombe (strain 972 / ATCC 24843) (Fission yeast).